Consider the following 429-residue polypeptide: tRNA-2-methylthio-N(6)-dimethylallyladenosine synthase (429 aa).

Residues lysine 2–phenylalanine 115 form the MTTase N-terminal domain. [4Fe-4S] cluster contacts are provided by cysteine 11, cysteine 46, cysteine 78, cysteine 147, cysteine 151, and cysteine 154. The 233-residue stretch at arginine 133–glutamate 365 folds into the Radical SAM core domain. The TRAM domain occupies lysine 368–alanine 429.

Belongs to the methylthiotransferase family. MiaB subfamily. As to quaternary structure, monomer. Requires [4Fe-4S] cluster as cofactor.

It is found in the cytoplasm. It carries out the reaction N(6)-dimethylallyladenosine(37) in tRNA + (sulfur carrier)-SH + AH2 + 2 S-adenosyl-L-methionine = 2-methylsulfanyl-N(6)-dimethylallyladenosine(37) in tRNA + (sulfur carrier)-H + 5'-deoxyadenosine + L-methionine + A + S-adenosyl-L-homocysteine + 2 H(+). Catalyzes the methylthiolation of N6-(dimethylallyl)adenosine (i(6)A), leading to the formation of 2-methylthio-N6-(dimethylallyl)adenosine (ms(2)i(6)A) at position 37 in tRNAs that read codons beginning with uridine. The polypeptide is tRNA-2-methylthio-N(6)-dimethylallyladenosine synthase (Campylobacter hominis (strain ATCC BAA-381 / DSM 21671 / CCUG 45161 / LMG 19568 / NCTC 13146 / CH001A)).